Here is a 671-residue protein sequence, read N- to C-terminus: Polyadenylate-binding protein 8 (671 aa).

4 RRM domains span residues 45–123 (TSLY…YSVR), 133–210 (GNIF…PFVH), 224–301 (TNVY…KAQK), and 327–404 (SNLY…LAQR). The interval 467–526 (LVPGMRPGGSPMPNFFMPMMQQGQQQQQQQQQQQRPGGGRRGALPQPQQPSPMMQQQMHP) is disordered. 2 stretches are compositionally biased toward low complexity: residues 483–501 (MPMMQQGQQQQQQQQQQQR) and 508–525 (GALPQPQQPSPMMQQQMH). The PABC domain occupies 573–650 (PIVALATRLA…AMDVLRSVAQ (78 aa)).

Belongs to the polyadenylate-binding protein type-1 family. Interacts with ERD15/CID1. Interacts with Turnip mosaic virus (TuMV) VPg-Pro and RNA-dependent RNA polymerase (RdRp). Expressed predominantly in immature flowers.

Its subcellular location is the cytoplasm. The protein localises to the nucleus. Binds the poly(A) tail of mRNA. Appears to be an important mediator of the multiple roles of the poly(A) tail in mRNA biogenesis, stability and translation. During infection with potyvirus TuMV, acts as a potential integral component of the viral replicase complex that could play an important role in the regulation of potyviral RNA-dependent RNA polymerase (RdRp). In Arabidopsis thaliana (Mouse-ear cress), this protein is Polyadenylate-binding protein 8 (PAB8).